Consider the following 319-residue polypeptide: Acetyl esterase (319 aa).

An Involved in the stabilization of the negatively charged intermediate by the formation of the oxyanion hole motif is present at residues 91–93; sequence HGG. Active-site residues include Ser165, Asp262, and His292.

Belongs to the 'GDXG' lipolytic enzyme family. Homodimer. Interacts with MalT and MelA.

The protein localises to the cytoplasm. Its function is as follows. Displays esterase activity towards short chain fatty esters (acyl chain length of up to 8 carbons). Able to hydrolyze triacetylglycerol (triacetin) and tributyrylglycerol (tributyrin), but not trioleylglycerol (triolein) or cholesterol oleate. Negatively regulates MalT activity by antagonizing maltotriose binding. Inhibits MelA galactosidase activity. This is Acetyl esterase from Escherichia coli O45:K1 (strain S88 / ExPEC).